Here is an 85-residue protein sequence, read N- to C-terminus: uncharacterized protein (85 aa).

The next 2 helical transmembrane spans lie at 12-34 (ICLSVVTFSTSYSLDAGVVVLAF) and 49-71 (IPEFLWVTWQSFIKVLSLLNGFV).

It is found in the cell membrane. This is an uncharacterized protein from Archaeoglobus fulgidus (strain ATCC 49558 / DSM 4304 / JCM 9628 / NBRC 100126 / VC-16).